Here is a 476-residue protein sequence, read N- to C-terminus: Glutamate--tRNA ligase (476 aa).

Residues 9–19 carry the 'HIGH' region motif; sequence PSPTGTLHLGT. A 'KMSKS' region motif is present at residues 248 to 252; that stretch reads KLSKR. Lys-251 contacts ATP.

This sequence belongs to the class-I aminoacyl-tRNA synthetase family. Glutamate--tRNA ligase type 1 subfamily. In terms of assembly, monomer.

It is found in the cytoplasm. It catalyses the reaction tRNA(Glu) + L-glutamate + ATP = L-glutamyl-tRNA(Glu) + AMP + diphosphate. Its function is as follows. Catalyzes the attachment of glutamate to tRNA(Glu) in a two-step reaction: glutamate is first activated by ATP to form Glu-AMP and then transferred to the acceptor end of tRNA(Glu). The sequence is that of Glutamate--tRNA ligase from Prochlorococcus marinus (strain NATL2A).